The sequence spans 213 residues: Penicillin-binding protein activator LpoB (213 aa).

Residues 1 to 19 (MMKMNRYALVAALAIFLSG) form the signal peptide. Cys20 is lipidated: N-palmitoyl cysteine. Cys20 carries the S-diacylglycerol cysteine lipid modification. The interval 26–71 (PAPVDEVKPAPEQPAEPQQPVPVVPSVPTIPQQPGPIEHEDQTAQP) is disordered. A compositionally biased stretch (pro residues) spans 36–50 (PEQPAEPQQPVPVVP).

Belongs to the LpoB family. In terms of assembly, interacts with PBP1b.

It is found in the cell outer membrane. Functionally, regulator of peptidoglycan synthesis that is essential for the function of penicillin-binding protein 1B (PBP1b). The polypeptide is Penicillin-binding protein activator LpoB (Citrobacter koseri (strain ATCC BAA-895 / CDC 4225-83 / SGSC4696)).